A 267-amino-acid polypeptide reads, in one-letter code: MTLLEIMRPANCVMAGAASLTGMLVSGALLQSLHTPVLVFSAVLLITGGGNAINDYFDREIDAVNRPDRPIPSGRISPRAALIWSVALFIAGCLIAGLINQSCLALALLNSFVLIIYAARLKGLPVAGNIAISYLTGTTFLFGGLAASPSSITAFLSILSALATLSREIVKDIEDLPGDLAHGAKTLPAFIGKRKSFVLASLVLIVAMLLSYLVPLGIDYQAAVSIANLAFLLSIKRMLCGDASGSQRWIKMGMGMALVAFLIGYHI.

The next 7 helical transmembrane spans lie at 10–30 (ANCVMAGAASLTGMLVSGALL), 33–53 (LHTPVLVFSAVLLITGGGNAI), 80–100 (AALIWSVALFIAGCLIAGLIN), 104–121 (LALALLNSFVLIIYAARL), 139–159 (TFLFGGLAASPSSITAFLSIL), 198–218 (VLASLVLIVAMLLSYLVPLGI), and 247–267 (QRWIKMGMGMALVAFLIGYHI).

Belongs to the UbiA prenyltransferase family. DGGGP synthase subfamily. Mg(2+) is required as a cofactor.

The protein localises to the cell membrane. The enzyme catalyses sn-3-O-(geranylgeranyl)glycerol 1-phosphate + (2E,6E,10E)-geranylgeranyl diphosphate = 2,3-bis-O-(geranylgeranyl)-sn-glycerol 1-phosphate + diphosphate. Its pathway is membrane lipid metabolism; glycerophospholipid metabolism. Prenyltransferase that catalyzes the transfer of the geranylgeranyl moiety of geranylgeranyl diphosphate (GGPP) to the C2 hydroxyl of (S)-3-O-geranylgeranylglyceryl phosphate (GGGP). This reaction is the second ether-bond-formation step in the biosynthesis of archaeal membrane lipids. This chain is Digeranylgeranylglyceryl phosphate synthase, found in Methanothrix thermoacetophila (strain DSM 6194 / JCM 14653 / NBRC 101360 / PT) (Methanosaeta thermophila).